Here is a 350-residue protein sequence, read N- to C-terminus: Protein RecA (350 aa).

Residue 80–87 coordinates ATP; it reads GPESSGKT.

It belongs to the RecA family.

It localises to the cytoplasm. Its function is as follows. Can catalyze the hydrolysis of ATP in the presence of single-stranded DNA, the ATP-dependent uptake of single-stranded DNA by duplex DNA, and the ATP-dependent hybridization of homologous single-stranded DNAs. It interacts with LexA causing its activation and leading to its autocatalytic cleavage. The protein is Protein RecA of Chlorobium limicola (strain DSM 245 / NBRC 103803 / 6330).